Reading from the N-terminus, the 534-residue chain is Acyl-CoA-binding domain-containing protein 5 (534 aa).

One can recognise an ACB domain in the interval 41–130 (HETRFEAAVK…MKKIIETMPM (90 aa)). An an acyl-CoA-binding site is contributed by 52-61 (IQSLPKNGSF). P63 is subject to Phosphothreonine. An acyl-CoA-binding positions include 72-76 (YSFYK), K98, and Y117. Phosphothreonine occurs at positions 137 and 172. The segment at 181–225 (TPNAKTVNGKAESSDSGAESEEEEAQEEVKGAEQSDNDKKMMKKS) is disordered. The stretch at 190–219 (KAESSDSGAESEEEEAQEEVKGAEQSDNDK) forms a coiled coil. Residues S193, S194, S196, S200, S215, S279, and S313 each carry the phosphoserine modification. Over residues 207–225 (EEVKGAEQSDNDKKMMKKS) the composition is skewed to basic and acidic residues. Residues 376–385 (EVKHGGEDGR) show a composition bias toward basic and acidic residues. The tract at residues 376 to 442 (EVKHGGEDGR…ERWGSDRGSR (67 aa)) is disordered. T400 is subject to Phosphothreonine. Position 428 is a phosphoserine (S428). A compositionally biased stretch (basic and acidic residues) spans 431–441 (DGERWGSDRGS). Residues 447–476 (EQIALVLMRLQEDMQNVLQRLQKLETLTAL) are a coiled coil. K469 carries the post-translational modification N6-acetyllysine. The helical transmembrane segment at 506–526 (GVLTFAIIWPFIAQWLVYLYY) threads the bilayer.

It belongs to the ATG37 family.

It is found in the peroxisome membrane. Functionally, acyl-CoA binding protein which acts as the peroxisome receptor for pexophagy but is dispensable for aggrephagy and nonselective autophagy. Binds medium- and long-chain acyl-CoA esters. The chain is Acyl-CoA-binding domain-containing protein 5 (ACBD5) from Homo sapiens (Human).